The chain runs to 111 residues: Nucleoid-associated protein CT0805 (111 aa).

This sequence belongs to the YbaB/EbfC family. Homodimer.

The protein localises to the cytoplasm. It localises to the nucleoid. Its function is as follows. Binds to DNA and alters its conformation. May be involved in regulation of gene expression, nucleoid organization and DNA protection. This Chlorobaculum tepidum (strain ATCC 49652 / DSM 12025 / NBRC 103806 / TLS) (Chlorobium tepidum) protein is Nucleoid-associated protein CT0805.